The following is a 358-amino-acid chain: NADH-quinone oxidoreductase subunit H (358 aa).

8 consecutive transmembrane segments (helical) span residues 30 to 50 (VVIGVCIVALYAILAILLIYM), 96 to 116 (FLYNLAPFMVIIASFLTFSCL), 129 to 149 (VGVFFLLAASSIGVVGILLAG), 168 to 188 (IISYELSVGLSILTMVVLMGT), 201 to 221 (GWFIFKGHIPALIAFVIYLIA), 265 to 285 (FIVAAVAATIFLGGWMPLHIV), 297 to 317 (IPGFIWFFGKAFFVVFLLMWI), and 336 to 356 (YLVPISMVNLVIMVLIVVFGL).

The protein belongs to the complex I subunit 1 family. In terms of assembly, NDH-1 is composed of 14 different subunits. Subunits NuoA, H, J, K, L, M, N constitute the membrane sector of the complex.

It localises to the cell inner membrane. It catalyses the reaction a quinone + NADH + 5 H(+)(in) = a quinol + NAD(+) + 4 H(+)(out). In terms of biological role, NDH-1 shuttles electrons from NADH, via FMN and iron-sulfur (Fe-S) centers, to quinones in the respiratory chain. The immediate electron acceptor for the enzyme in this species is believed to be ubiquinone. Couples the redox reaction to proton translocation (for every two electrons transferred, four hydrogen ions are translocated across the cytoplasmic membrane), and thus conserves the redox energy in a proton gradient. This subunit may bind ubiquinone. In Bacteroides fragilis (strain ATCC 25285 / DSM 2151 / CCUG 4856 / JCM 11019 / LMG 10263 / NCTC 9343 / Onslow / VPI 2553 / EN-2), this protein is NADH-quinone oxidoreductase subunit H.